A 252-amino-acid polypeptide reads, in one-letter code: Protein AGAMOUS-LIKE 6 (252 aa).

The MADS-box domain maps to 1-61 (MGRGRVELKR…GKLYEFGSAG (61 aa)). 2 short sequence motifs (nuclear localization signal) span residues 8-15 (LKRIENKI) and 138-145 (QRKTQIMM). In terms of domain architecture, K-box spans 85–175 (TQSWYQEVSK…KIKVSLELSS (91 aa)).

Restricted to flowers.

It localises to the nucleus. Probable transcription factor involved in fruit development. Key regulator of the transition between the state of 'ovary arrest' imposed towards anthesis and the fertilization-triggered fruit set. The sequence is that of Protein AGAMOUS-LIKE 6 from Solanum lycopersicum (Tomato).